We begin with the raw amino-acid sequence, 212 residues long: Glutathione S-transferase hmp2 (212 aa).

The GST N-terminal domain occupies 1–80; it reads MVIKLYGSAM…YLARKYDSGT (80 aa). Glutathione is bound by residues 51–52 and 64–65; these read KV and ES. The GST C-terminal domain occupies 88 to 212; it reads DHEAYGRFEQ…TWIKATAEAR (125 aa).

This sequence belongs to the GST superfamily.

It catalyses the reaction RX + glutathione = an S-substituted glutathione + a halide anion + H(+). Its pathway is secondary metabolite biosynthesis. Its function is as follows. Glutathione S-transferase; part of the gene cluster that mediates the biosynthesis of hypothemycin, a resorcylic acid lactone (RAL) that irreversibly inhibits a subset of protein kinases with a conserved cysteine in the ATP binding site such as human ERK2. The first step is performed by both PKSs hmp3 and hmp8 and leads to the production of 7',8'-dehydrozearalenol (DHZ). The highly reducing PKS hpm8 synthesizes the reduced hexaketide (7S,11S,2E,8E)-7,11-dihydroxy-dodeca-2,8-dienoate, which is transferred downstream to the non-reducing PKS hpm3. Hpm3 then extends the reduced hexaketide to a nonaketide, after which regioselective cyclization and macrolactonization affords DHZ. The next step is the conversion of DHZ into aigialomycin C and is performed by the O-methyltransferase hmp5, the FAD-binding monooxygenase hmp7, and the cytochrome P450 monooxygenase hmp1. The wide substrate tolerance of the hmp5 and hmp7 implies that the reactions from DHZ to aigialomycin C can occur in any order. The steps from aigialomycin C to hypothemycin are less well established. The FAD-linked oxidoreductase hmp9 presumably catalyzes oxidation of the C-6' hydroxyl to a ketone. The timing of this oxidation is important, since the resulting enone functional group is a Michael acceptor that can react spontaneously with glutathione, an abundant metabolite in fungal cells. The glutathione S-transferase hmp2 catalyzes cis-trans isomerization of the 7',8' double bond with equilibrium favoring the trans isomer. The hpm6-encoded transporter might preferentially pump hypothemycin out of the cell relative to the trans isomer aigialomycin A. The cis-to-trans isomerization may be coupled with C-4' hydroxylation, since all known hypothemycin analogs containing the enone functional group also have hydroxyl groups at both C-4' and C-5'. This is Glutathione S-transferase hmp2 from Hypomyces subiculosus (Nectria subiculosa).